The chain runs to 2320 residues: MAEPSSARRPVPLIESELYFLIARYLSAGPCRRAAQVLVQELEQYQLLPKRLDWEGNEHNRSYEELVLSNKHVAPDHLLQICQRIGPMLDKEIPPSISRVTSLLGAGRQSLLRTAKDCRHTVWKGSAFAALHRGRPPEMPVNYGSPPNLVEIHRGKQLTGCSTFSTAFPGTMYQHIKMHRRILGHLSAVYCVAFDRTGHRIFTGSDDCLVKIWSTHNGRLLSTLRGHSAEISDMAVNYENTMIAAGSCDKIIRVWCLRTCAPVAVLQGHTGSITSLQFSPMAKGSQRYMVSTGADGTVCFWQWDLESLKFSPRPLKFTEKPRPGVQMLCSSFSVGGMFLATGSTDHVIRMYFLGFEAPEKIAELESHTDKVDSIQFCNNGDRFLSGSRDGTARIWRFEQLEWRSILLDMATRISGDLSSEEERFMKPKVTMIAWNQNDSIVVTAVNDHVLKVWNSYTGQLLHNLMGHADEVFVLETHPFDSRIMLSAGHDGSIFIWDITKGTKMKHYFNMIEGQGHGAVFDCKFSQDGQHFACTDSHGHLLIFGFGCSKPYEKIPDQMFFHTDYRPLIRDSNNYVLDEQTQQAPHLMPPPFLVDVDGNPHPTKYQRLVPGRENSADEHLIPQLGYVATSDGEVIEQIISLQTNDNDERSPESSILDGMIRQLQQQQDQRMGADQDTIPRGLSNGEETPRRGFRRLSLDIQSPPNIGLRRSGQVEGVRQMHQNAPRSQIATERDLQAWKRRVVVPEVPLGIFRKLEDFRLEKGEEERNLYIIGRKRKTLQLSHKSDSVVLVSQSRQRTCRRKYPNYGRRNRSWRELSSGNESSSSVRHETSCDQSEGSGSSEEDEWRSDRKSESYSESSSDSSSRYSDWTADAGINLQPPLRTSCRRRITRFCSSSEDEISTENLSPPKRRRKRKKENKPKKENLRRMTPAELANMEHLYEFHPPVWITDTTLRKSPFVPQMGDEVIYFRQGHEAYIEAVRRNNIYELNPNKEPWRKMDLRDQELVKIVGIRYEVGPPTLCCLKLAFIDPATGKLMDKSFSIRYHDMPDVIDFLVLRQFYDEARQRNWQSCDRFRSIIDDAWWFGTVLSQEPYQPQYPDSHFQCYIVRWDNTEIEKLSPWDMEPIPDNVDPPEELGASISVTTDELEKLLYKPQAGEWGQKSRDEECDRIISGIDQLLNLDIAAAFAGPVDLCTYPKYCTVVAYPTDLYTIRMRLVNRFYRRLSALVWEVRYIEHNARTFNEPESVIARSAKKITDQLLKFIKNQHCTNISELSNTSENDEQNAEDLDDSDLPKTSSGRRRVHDGKKSIRATNYVESNWKKQCKELVNLIFQCEDSEPFRQPVDLVEYPDYRDIIDTPMDFGTVRETLDAGNYDSPLEFCKDIRLIFSNAKAYTPNKRSKIYSMTLRLSALFEEKMKKISSDFKIGQKFNEKLRRSQRFKQRQNCKGDSQPNKSIRNLKPKRLKSQTKIIPELVGSPTQSTSSRTAYLGTHKTSAGISSGVTSGDSSDSAESSERRKRNRPITNGSTLSESEVEDSLATSLSSSASSSSEESKESSRARESSSRSGLSRSSNLRVTRTRAAQRKTGPVSLANGCGRKATRKRVYLSDSDNNSLETGEILKARAGNNRKVLRKCAAVAANKIKLMSDVEENSSSESVCSGRKLPHRNASAVARKKLLHNSEDEQSLKSEIEEEELKDENQLLPVSSSHTAQSNVDESENRDSESESDLRVARKNWHANGYKSHTPAPSKTKFLKIESSEEDSKSHDSDHACNRTAGPSTSVQKLKAESISEEADSEPGRSGGRKYNTFHKNASFFKKTKILSDSEDSESEEQDREDGKCHKMEMNPISGNLNCDPIAMSQCSSDHGCETDLDSDDDKIEKPNNFMKDSASQDNGLSRKISRKRVCSSDSDSSLQVVKKSSKARTGLLRITRRCAATAANKIKLMSDVEDVSLENVHTRSKNGRKKPLHLACTTAKKKLSDCEGSVHCEVPSEQYACEGKPPDPDSEGSTKVLSQALNGDSDSEDMLNSEHKHRHTNIHKIDAPSKRKSSSVTSSGEDSKSHIPGSETDRTFSSESTLAQKATAENNFEVELNYGLRRWNGRRLRTYGKAPFSKTKVIHDSQETAEKEVKRKRSHPELENVKISETTGNSKFRPDTSSKSSDLGSVTESDIDCTDNTKTKRRKTKGKAKVVRKEFVPRDREPNTKVRTCMHNQKDAVQMPSETLKAKMVPEKVPRRCATVAANKIKIMSNLKETISGPENVWIRKSSRKLPHRNASAAAKKKLLNVYKEDDTTINSESEKELEDINRKMLFLRGFRSWKENAQ.

WD repeat units follow at residues 184–223, 226–265, 268–311, 322–365, 366–405, 424–463, 466–506, and 514–553; these read GHLSAVYCVAFDRTGHRIFTGSDDCLVKIWSTHNGRLLST, GHSAEISDMAVNYENTMIAAGSCDKIIRVWCLRTCAPVAV, GHTG…LKFS, RPGV…AELE, SHTDKVDSIQFCNNGDRFLSGSRDGTARIWRFEQLEWRSI, FMKPKVTMIAWNQNDSIVVTAVNDHVLKVWNSYTGQLLHN, GHAD…KMKH, and QGHGAVFDCKFSQDGQHFACTDSHGHLLIFGFGCSKPYEK. The segment at 668 to 691 is disordered; it reads QRMGADQDTIPRGLSNGEETPRRG. Phosphothreonine is present on Thr-687. Ser-696, Ser-701, and Ser-710 each carry phosphoserine. 2 disordered regions span residues 809-867 and 895-925; these read NRSW…RYSD and SEDEISTENLSPPKRRRKRKKENKPKKENLR. 2 stretches are compositionally biased toward low complexity: residues 814 to 824 and 854 to 867; these read ELSSGNESSSS and YSESSSDSSSRYSD. The segment covering 907–918 has biased composition (basic residues); the sequence is PKRRRKRKKENK. The Bromo 1 domain occupies 1157-1264; the sequence is WGQKSRDEEC…DQLLKFIKNQ (108 aa). The tract at residues 1271 to 1304 is disordered; it reads ELSNTSENDEQNAEDLDDSDLPKTSSGRRRVHDG. Over residues 1277–1289 the composition is skewed to acidic residues; that stretch reads ENDEQNAEDLDDS. Residue Ser-1289 is modified to Phosphoserine. The 106-residue stretch at 1313–1418 folds into the Bromo 2 domain; that stretch reads YVESNWKKQC…ALFEEKMKKI (106 aa). The disordered stretch occupies residues 1434–1593; that stretch reads RSQRFKQRQN…TGPVSLANGC (160 aa). Residues 1443–1454 show a composition bias toward polar residues; sequence NCKGDSQPNKSI. Over residues 1455 to 1464 the composition is skewed to basic residues; it reads RNLKPKRLKS. Ser-1475 bears the Phosphoserine mark. The segment covering 1475–1496 has biased composition (polar residues); it reads SPTQSTSSRTAYLGTHKTSAGI. A Phosphothreonine modification is found at Thr-1477. Ser-1479 is subject to Phosphoserine. The span at 1497-1509 shows a compositional bias: low complexity; sequence SSGVTSGDSSDSA. The span at 1520–1529 shows a compositional bias: polar residues; it reads PITNGSTLSE. Residues 1535 to 1548 show a composition bias toward low complexity; that stretch reads SLATSLSSSASSSS. Positions 1549–1561 are enriched in basic and acidic residues; it reads EESKESSRARESS. Ser-1605, Ser-1607, Ser-1678, Ser-1683, and Ser-1686 each carry phosphoserine. Disordered stretches follow at residues 1670-1805, 1817-1839, and 1862-1899; these read ARKK…KYNT, KILSDSEDSESEEQDREDGKCHK, and DHGCETDLDSDDDKIEKPNNFMKDSASQDNGLSRKISR. The span at 1676–1687 shows a compositional bias: basic and acidic residues; it reads HNSEDEQSLKSE. The segment covering 1701-1712 has biased composition (polar residues); sequence PVSSSHTAQSNV. Composition is skewed to basic and acidic residues over residues 1715–1728 and 1751–1769; these read SENRDSESESDLRV and LKIESSEEDSKSHDSDHAC. Residues Ser-1755, Ser-1756, Ser-1786, Ser-1788, Ser-1793, and Ser-1820 each carry the phosphoserine modification. A compositionally biased stretch (acidic residues) spans 1821-1832; that stretch reads DSEDSESEEQDR. Thr-1867 is subject to Phosphothreonine. Ser-1871, Ser-1904, Ser-1905, Ser-1907, Ser-1910, and Ser-1943 each carry phosphoserine. Position 1955 is a phosphothreonine (Thr-1955). Disordered regions lie at residues 2014–2077 and 2112–2184; these read LNGD…TLAQ and TKVI…TKGK. 3 positions are modified to phosphoserine: Ser-2018, Ser-2020, and Ser-2052. Basic and acidic residues-rich tracts occupy residues 2054 to 2069 and 2114 to 2139; these read EDSKSHIPGSETDRTF and VIHDSQETAEKEVKRKRSHPELENVK. Over residues 2140–2165 the composition is skewed to polar residues; the sequence is ISETTGNSKFRPDTSSKSSDLGSVTE. Thr-2164 bears the Phosphothreonine mark. 2 positions are modified to phosphoserine: Ser-2166 and Val-2214.

As to quaternary structure, interacts with SMARCA4. Ubiquitously expressed. Expressed in respiratory epithelial cells and testis spermatozoa.

It localises to the cytoplasm. The protein resides in the nucleus. The protein localises to the cell projection. Its subcellular location is the cilium membrane. It is found in the cytoskeleton. It localises to the flagellum axoneme. Functionally, may be a transcriptional activator. May be involved in chromatin remodeling. Plays a role in the regulation of cell morphology and cytoskeletal organization. Required in the control of cell shape. The sequence is that of Bromodomain and WD repeat-containing protein 1 (BRWD1) from Homo sapiens (Human).